The primary structure comprises 324 residues: Beta-ketoacyl-[acyl-carrier-protein] synthase III (324 aa).

Residues Cys112 and His249 contribute to the active site. The segment at 250-254 (QANRR) is ACP-binding. Residue Asn279 is part of the active site.

Belongs to the thiolase-like superfamily. FabH family. As to quaternary structure, homodimer.

The protein resides in the cytoplasm. The catalysed reaction is malonyl-[ACP] + acetyl-CoA + H(+) = 3-oxobutanoyl-[ACP] + CO2 + CoA. The protein operates within lipid metabolism; fatty acid biosynthesis. In terms of biological role, catalyzes the condensation reaction of fatty acid synthesis by the addition to an acyl acceptor of two carbons from malonyl-ACP. Catalyzes the first condensation reaction which initiates fatty acid synthesis and may therefore play a role in governing the total rate of fatty acid production. Possesses both acetoacetyl-ACP synthase and acetyl transacylase activities. Its substrate specificity determines the biosynthesis of branched-chain and/or straight-chain of fatty acids. The sequence is that of Beta-ketoacyl-[acyl-carrier-protein] synthase III from Streptococcus pyogenes serotype M49 (strain NZ131).